The primary structure comprises 75 residues: uncharacterized protein (75 aa).

The first 26 residues, 1–26 (MQFLERHFSVLFPVLFFFSFYPISFA), serve as a signal peptide directing secretion.

Its subcellular location is the secreted. This is an uncharacterized protein from Schizosaccharomyces pombe (strain 972 / ATCC 24843) (Fission yeast).